Here is a 302-residue protein sequence, read N- to C-terminus: Urease accessory protein UreD (302 aa).

It belongs to the UreD family. UreD, UreF and UreG form a complex that acts as a GTP-hydrolysis-dependent molecular chaperone, activating the urease apoprotein by helping to assemble the nickel containing metallocenter of UreC. The UreE protein probably delivers the nickel.

It localises to the cytoplasm. Its function is as follows. Required for maturation of urease via the functional incorporation of the urease nickel metallocenter. The protein is Urease accessory protein UreD of Pseudoalteromonas translucida (strain TAC 125).